The primary structure comprises 344 residues: Protein RecA (344 aa).

ATP is bound at residue 65–72 (GPESSGKT). A compositionally biased stretch (basic and acidic residues) spans 323 to 337 (ELREKFQPAEAPREA). A disordered region spans residues 323-344 (ELREKFQPAEAPREAGDDEDKE).

It belongs to the RecA family.

It is found in the cytoplasm. Can catalyze the hydrolysis of ATP in the presence of single-stranded DNA, the ATP-dependent uptake of single-stranded DNA by duplex DNA, and the ATP-dependent hybridization of homologous single-stranded DNAs. It interacts with LexA causing its activation and leading to its autocatalytic cleavage. This is Protein RecA from Xanthomonas euvesicatoria pv. vesicatoria (strain 85-10) (Xanthomonas campestris pv. vesicatoria).